The primary structure comprises 151 residues: Small ribosomal subunit protein uS15 (151 aa).

This sequence belongs to the universal ribosomal protein uS15 family.

The polypeptide is Small ribosomal subunit protein uS15 (RpS13) (Spodoptera frugiperda (Fall armyworm)).